Consider the following 425-residue polypeptide: uncharacterized protein (425 aa).

A run of 12 helical transmembrane segments spans residues 15–35 (LICA…SQML), 48–68 (LIGA…WAPL), 84–104 (MLLS…FDPL), 107–127 (LGTV…QDIV), 149–169 (INAY…LAAI), 174–194 (TVFL…LFLA), 225–245 (VIQA…DSFA), 271–291 (ALWS…KLGI), 295–315 (LWLF…LAAF), 331–351 (VVIA…VAFM), 370–390 (LSAL…GAVG), and 395–415 (FWFC…VAPL).

This sequence to E.coli AmpG and yeast YBR220c.

Its subcellular location is the cell inner membrane. This is an uncharacterized protein from Haemophilus influenzae (strain ATCC 51907 / DSM 11121 / KW20 / Rd).